Consider the following 671-residue polypeptide: Pescadillo homolog (671 aa).

Coiled coils occupy residues 294-323 (NQAQ…ELFR) and 548-584 (QALR…TRKM). Positions 317–403 (KVRELFRGLT…LVLPVTGYRI (87 aa)) constitute a BRCT domain. Disordered regions lie at residues 552–577 (KAQE…VKRQ) and 634–671 (GLVN…KWVQ). Residues 634–651 (GLVNKRLEARRQRAEAKG) are compositionally biased toward basic and acidic residues.

Belongs to the pescadillo family.

The protein resides in the nucleus. The protein localises to the nucleolus. It localises to the nucleoplasm. In terms of biological role, required for maturation of ribosomal RNAs and formation of the large ribosomal subunit. The chain is Pescadillo homolog from Leishmania major.